The following is a 362-amino-acid chain: Tyrosyl-DNA phosphodiesterase 2 (362 aa).

N-acetylmethionine is present on Met1. Residues 1-20 (MELGSCLEGGREAAEEEGEP) form a disordered region. Glycyl lysine isopeptide (Lys-Gly) (interchain with G-Cter in SUMO2) cross-links involve residues Lys23 and Lys82. The segment at 87–109 (LTNEETTDSTTSKISPSEDTQQE) is disordered. Phosphothreonine; by ACVR1B is present on residues Thr88 and Thr92. The span at 94–109 (DSTTSKISPSEDTQQE) shows a compositional bias: polar residues. The residue at position 95 (Ser95) is a Phosphoserine. Positions 120-124 (NIDGL) are interaction with 5' end of substrate DNA. Residues Asp122 and Glu152 each contribute to the Mg(2+) site. The segment at 226-231 (HLESTR) is interaction with 5' end of substrate DNA. Catalysis depends on Asp262, which acts as the Proton donor/acceptor. The interval 264–266 (NLR) is interaction with 5' end of substrate DNA.

It belongs to the CCR4/nocturin family. In terms of assembly, interacts with TRAF2, TRAF3, TRAF5, TRAF6, TNFRSF8/CD30, TNFRSF5/CD40, TNFRSF1B/TNF-R75, ETS1, ETS2, FLI1, SMAD3 and ACVR1B/ALK4. As to quaternary structure, (Microbial infection) Interacts with Hantaan hantavirus nucleoprotein. (Microbial infection) Interacts with Seoul hantavirus nucleoprotein. Mg(2+) is required as a cofactor. Mn(2+) serves as cofactor. Ubiquitinated by TRAF6. In terms of tissue distribution, widely expressed. Highly expressed in various brain regions, including the frontal and occipital lobes, the hippocampus, the striatum and the cerebellum.

Its subcellular location is the nucleus. The protein localises to the PML body. The protein resides in the nucleolus. It is found in the cytoplasm. Functionally, DNA repair enzyme that can remove a variety of covalent adducts from DNA through hydrolysis of a 5'-phosphodiester bond, giving rise to DNA with a free 5' phosphate. Catalyzes the hydrolysis of dead-end complexes between DNA and the topoisomerase 2 (TOP2) active site tyrosine residue. The 5'-tyrosyl DNA phosphodiesterase activity can enable the repair of TOP2-induced DNA double-strand breaks/DSBs without the need for nuclease activity, creating a 'clean' DSB with 5'-phosphate termini that are ready for ligation. Thereby, protects the transcription of many genes involved in neurological development and maintenance from the abortive activity of TOP2. Hydrolyzes 5'-phosphoglycolates on protruding 5' ends on DSBs due to DNA damage by radiation and free radicals. Has preference for single-stranded DNA or duplex DNA with a 4 base pair overhang as substrate. Acts as a regulator of ribosome biogenesis following stress. Also has 3'-tyrosyl DNA phosphodiesterase activity, but less efficiently and much slower than TDP1. Constitutes the major if not only 5'-tyrosyl-DNA phosphodiesterase in cells. Also acts as an adapter by participating in the specific activation of MAP3K7/TAK1 in response to TGF-beta: associates with components of the TGF-beta receptor-TRAF6-TAK1 signaling module and promotes their ubiquitination dependent complex formation. Involved in non-canonical TGF-beta induced signaling routes. May also act as a negative regulator of ETS1 and may inhibit NF-kappa-B activation. Its function is as follows. (Microbial infection) Used by picornaviruses to remove the small polypeptide, VPg (virus Protein genome-linked, the primer for viral RNA synthesis), from the genomic RNA of the virus. Acts as a 5'-tyrosyl RNA phosphodiesterase and cleaves the covalent VPg-Tyr-RNA bond. This cleavage would play a role in viral replication and occur in viral replication vesicles, but would not act on viral mRNA. In Homo sapiens (Human), this protein is Tyrosyl-DNA phosphodiesterase 2.